Reading from the N-terminus, the 285-residue chain is uncharacterized protein (285 aa).

Positions threonine 92 to arginine 199 constitute a Guanylate cyclase domain.

The protein belongs to the adenylyl cyclase class-4/guanylyl cyclase family.

This is an uncharacterized protein from Mycobacterium tuberculosis (strain ATCC 25618 / H37Rv).